Reading from the N-terminus, the 118-residue chain is Large ribosomal subunit protein bL19 (118 aa).

Belongs to the bacterial ribosomal protein bL19 family.

Functionally, this protein is located at the 30S-50S ribosomal subunit interface and may play a role in the structure and function of the aminoacyl-tRNA binding site. The sequence is that of Large ribosomal subunit protein bL19 from Hahella chejuensis (strain KCTC 2396).